A 383-amino-acid polypeptide reads, in one-letter code: Putative glutamate--cysteine ligase 2-1 (383 aa).

It belongs to the glutamate--cysteine ligase type 2 family. YbdK subfamily.

It catalyses the reaction L-cysteine + L-glutamate + ATP = gamma-L-glutamyl-L-cysteine + ADP + phosphate + H(+). ATP-dependent carboxylate-amine ligase which exhibits weak glutamate--cysteine ligase activity. This Nocardia farcinica (strain IFM 10152) protein is Putative glutamate--cysteine ligase 2-1.